Reading from the N-terminus, the 495-residue chain is NADP/NAD-dependent aldehyde dehydrogenase PuuC (495 aa).

244 to 249 (GSTRTG) lines the NAD(+) pocket. Residues glutamate 267 and cysteine 302 contribute to the active site.

The protein belongs to the aldehyde dehydrogenase family.

It catalyses the reaction an aldehyde + NADP(+) + H2O = a carboxylate + NADPH + 2 H(+). It carries out the reaction an aldehyde + NAD(+) + H2O = a carboxylate + NADH + 2 H(+). The catalysed reaction is 4-(gamma-L-glutamylamino)butanal + NADP(+) + H2O = 4-(gamma-L-glutamylamino)butanoate + NADPH + 2 H(+). The enzyme catalyses 4-(gamma-L-glutamylamino)butanal + NAD(+) + H2O = 4-(gamma-L-glutamylamino)butanoate + NADH + 2 H(+). Its pathway is amine and polyamine degradation; putrescine degradation; 4-aminobutanoate from putrescine: step 3/4. Lithium ions exhibits the highest inhibition (97%). To a lesser extent (5-20%), potassium, sodium, and ammonium ions also inhibit PuuC activity. Transition metals, such as copper and zinc ions inhibit PuuC activity by more than 90%. The presence of heavy metals (mercury, silver) or sodium hydrogensulfite in the reaction mixture completely inactivate PuuC; in contrast, disulfide reductants such as DTT and 2-mercaptoethanol significantly increase its activity by 75% and 27%, respectively. Functionally, catalyzes the oxidation of 3-hydroxypropionaldehyde (3-HPA) to 3-hydroxypropionic acid (3-HP). It acts preferentially with NAD but can also use NADP. 3-HPA appears to be the most suitable substrate for PuuC followed by isovaleraldehyde, propionaldehyde, butyraldehyde, and valeraldehyde. It might play a role in propionate and/or acetic acid metabolisms. Also involved in the breakdown of putrescine through the oxidation of gamma-Glu-gamma-aminobutyraldehyde to gamma-Glu-gamma-aminobutyrate (gamma-Glu-GABA). The protein is NADP/NAD-dependent aldehyde dehydrogenase PuuC of Escherichia coli (strain K12).